Reading from the N-terminus, the 829-residue chain is Leucine--tRNA ligase (829 aa).

The 'HIGH' region motif lies at 40–51; it reads PYPSGAGLHVGH. Positions 609–613 match the 'KMSKS' region motif; sequence KMSKS. Residue lysine 612 coordinates ATP.

It belongs to the class-I aminoacyl-tRNA synthetase family.

It is found in the cytoplasm. It carries out the reaction tRNA(Leu) + L-leucine + ATP = L-leucyl-tRNA(Leu) + AMP + diphosphate. In Lactococcus lactis subsp. lactis (strain IL1403) (Streptococcus lactis), this protein is Leucine--tRNA ligase.